Reading from the N-terminus, the 378-residue chain is 5-amino-6-(D-ribitylamino)uracil--L-tyrosine 4-hydroxyphenyl transferase (378 aa).

The Radical SAM core domain occupies 59–306 (VTYVINRNIN…TAVARIYLGN (248 aa)). Residues Cys73, Cys77, and Cys80 each contribute to the [4Fe-4S] cluster site.

This sequence belongs to the radical SAM superfamily. CofH family. As to quaternary structure, consists of two subunits, CofG and CofH. The cofactor is [4Fe-4S] cluster.

The enzyme catalyses 5-amino-6-(D-ribitylamino)uracil + L-tyrosine + S-adenosyl-L-methionine = 5-amino-5-(4-hydroxybenzyl)-6-(D-ribitylimino)-5,6-dihydrouracil + 2-iminoacetate + 5'-deoxyadenosine + L-methionine + H(+). Its pathway is cofactor biosynthesis; coenzyme F0 biosynthesis. Catalyzes the radical-mediated synthesis of 5-amino-5-(4-hydroxybenzyl)-6-(D-ribitylimino)-5,6-dihydrouracil from 5-amino-6-(D-ribitylamino)uracil and L-tyrosine. In Microcystis aeruginosa (strain NIES-843 / IAM M-2473), this protein is 5-amino-6-(D-ribitylamino)uracil--L-tyrosine 4-hydroxyphenyl transferase.